The chain runs to 428 residues: tRNA modification GTPase MnmE (428 aa).

(6S)-5-formyl-5,6,7,8-tetrahydrofolate-binding residues include Arg20, Glu77, and Lys117. Positions 213–351 constitute a TrmE-type G domain; that stretch reads GFEVAIVGSP…LVSRISDTLR (139 aa). GTP is bound by residues 223-228, 242-248, and 267-270; these read NVGKST, SEYAGTT, and DTAG. 2 residues coordinate Mg(2+): Ser227 and Thr248. Lys428 provides a ligand contact to (6S)-5-formyl-5,6,7,8-tetrahydrofolate.

The protein belongs to the TRAFAC class TrmE-Era-EngA-EngB-Septin-like GTPase superfamily. TrmE GTPase family. Homodimer. Heterotetramer of two MnmE and two MnmG subunits. K(+) is required as a cofactor.

It is found in the cytoplasm. Its function is as follows. Exhibits a very high intrinsic GTPase hydrolysis rate. Involved in the addition of a carboxymethylaminomethyl (cmnm) group at the wobble position (U34) of certain tRNAs, forming tRNA-cmnm(5)s(2)U34. In Ruegeria sp. (strain TM1040) (Silicibacter sp.), this protein is tRNA modification GTPase MnmE.